The primary structure comprises 671 residues: ATP-dependent zinc metalloprotease FtsH (671 aa).

At 1 to 22 (MANPNNNNDNKQNNNNNFFNDN) the chain is on the cytoplasmic side. A helical membrane pass occupies residues 23–43 (PLLAFAIFSIVIILIFKSFVG). Residues 44-130 (EGESLGTMMN…ISYEGVVGNG (87 aa)) lie on the Periplasmic side of the membrane. Residues 131–151 (FFSELISMMLPILIFFAIWIF) traverse the membrane as a helical segment. Residues 152 to 671 (LAKKMSKGMG…SEESDNNKEA (520 aa)) are Cytoplasmic-facing. 224 to 231 (GPPGTGKT) lines the ATP pocket. H447 contacts Zn(2+). The active site involves E448. Residues H451 and D525 each coordinate Zn(2+). The disordered stretch occupies residues 630–671 (EKGMPSRLAHKDKVAKNKAEADKKEEALKKEISEESDNNKEA).

It in the central section; belongs to the AAA ATPase family. The protein in the C-terminal section; belongs to the peptidase M41 family. In terms of assembly, homohexamer. The cofactor is Zn(2+).

The protein localises to the cell inner membrane. Acts as a processive, ATP-dependent zinc metallopeptidase for both cytoplasmic and membrane proteins. Plays a role in the quality control of integral membrane proteins. The polypeptide is ATP-dependent zinc metalloprotease FtsH (Sulfurovum sp. (strain NBC37-1)).